We begin with the raw amino-acid sequence, 641 residues long: 1-deoxy-D-xylulose-5-phosphate synthase (641 aa).

Thiamine diphosphate is bound by residues His-71 and 112–114 (SHA). Asp-144 is a Mg(2+) binding site. Thiamine diphosphate contacts are provided by residues 145 to 146 (GA), Asn-173, Tyr-284, and Glu-365. A Mg(2+)-binding site is contributed by Asn-173.

This sequence belongs to the transketolase family. DXPS subfamily. Homodimer. Requires Mg(2+) as cofactor. Thiamine diphosphate serves as cofactor.

The catalysed reaction is D-glyceraldehyde 3-phosphate + pyruvate + H(+) = 1-deoxy-D-xylulose 5-phosphate + CO2. Its pathway is metabolic intermediate biosynthesis; 1-deoxy-D-xylulose 5-phosphate biosynthesis; 1-deoxy-D-xylulose 5-phosphate from D-glyceraldehyde 3-phosphate and pyruvate: step 1/1. Its function is as follows. Catalyzes the acyloin condensation reaction between C atoms 2 and 3 of pyruvate and glyceraldehyde 3-phosphate to yield 1-deoxy-D-xylulose-5-phosphate (DXP). The protein is 1-deoxy-D-xylulose-5-phosphate synthase of Mycolicibacterium paratuberculosis (strain ATCC BAA-968 / K-10) (Mycobacterium paratuberculosis).